The chain runs to 264 residues: Glutamate racemase (264 aa).

Residues 10-11 (DS) and 42-43 (YG) contribute to the substrate site. Cys73 serves as the catalytic Proton donor/acceptor. Residue 74–75 (NT) participates in substrate binding. Cys183 (proton donor/acceptor) is an active-site residue. 184–185 (TH) provides a ligand contact to substrate.

It belongs to the aspartate/glutamate racemases family.

The catalysed reaction is L-glutamate = D-glutamate. Its pathway is cell wall biogenesis; peptidoglycan biosynthesis. Provides the (R)-glutamate required for cell wall biosynthesis. The polypeptide is Glutamate racemase (Streptococcus pneumoniae (strain ATCC BAA-255 / R6)).